A 418-amino-acid polypeptide reads, in one-letter code: CinA-like protein (418 aa).

Belongs to the CinA family.

The sequence is that of CinA-like protein from Cyanothece sp. (strain PCC 7425 / ATCC 29141).